The chain runs to 476 residues: Glucose-1-phosphate adenylyltransferase (476 aa).

Alpha-D-glucose 1-phosphate-binding positions include Y114, G179, 194–195, and S212; that span reads EK.

Belongs to the bacterial/plant glucose-1-phosphate adenylyltransferase family. As to quaternary structure, homotetramer.

The catalysed reaction is alpha-D-glucose 1-phosphate + ATP + H(+) = ADP-alpha-D-glucose + diphosphate. It participates in glycan biosynthesis; glycogen biosynthesis. In terms of biological role, involved in the biosynthesis of ADP-glucose, a building block required for the elongation reactions to produce glycogen. Catalyzes the reaction between ATP and alpha-D-glucose 1-phosphate (G1P) to produce pyrophosphate and ADP-Glc. This is Glucose-1-phosphate adenylyltransferase from Yersinia pestis.